The chain runs to 392 residues: Phosphoglycerate kinase (392 aa).

Substrate is bound by residues 21 to 23 (DMN), arginine 36, 59 to 62 (HLGR), arginine 114, and arginine 147. ATP is bound by residues lysine 198, glutamate 320, and 346-349 (GGDT).

Belongs to the phosphoglycerate kinase family. As to quaternary structure, monomer.

It localises to the cytoplasm. It carries out the reaction (2R)-3-phosphoglycerate + ATP = (2R)-3-phospho-glyceroyl phosphate + ADP. It participates in carbohydrate degradation; glycolysis; pyruvate from D-glyceraldehyde 3-phosphate: step 2/5. This Neisseria meningitidis serogroup A / serotype 4A (strain DSM 15465 / Z2491) protein is Phosphoglycerate kinase.